Reading from the N-terminus, the 720-residue chain is Beta-glucan synthesis-associated protein KRE6 (720 aa).

Polar residues-rich tracts occupy residues M1–L17, L31–L51, and S69–S90. The segment at M1–S90 is disordered. Topologically, residues M1–G252 are cytoplasmic. Phosphoserine is present on residues S81, S116, S133, S134, S136, and S139. Disordered regions lie at residues T117 to S142 and Q167 to S189. Residues S133 to S142 are compositionally biased toward low complexity. The helical; Signal-anchor for type II membrane protein transmembrane segment at L253–L273 threads the bilayer. At T274–S720 the chain is on the lumenal side. A GH16 domain is found at T289–A664. N374, N461, N538, N563, and N691 each carry an N-linked (GlcNAc...) asparagine glycan.

It belongs to the SKN1/KRE6 family. The cytoplasmic domain interacts with the actin patch assembly proteins LAS17 and SLA1. Interacts with KEG1.

It localises to the golgi apparatus membrane. Involved in the synthesis of (1-&gt;6)- and (1-&gt;3)-beta-D-glucan polymers of the yeast cell wall in vivo. It is required for full activity of beta-glucan synthase in vitro. May be involved in the maturation and transport of cell wall proteins (CWP) to the cell wall. May act as a transglucosidase and contribute to the construction of a protein-bound glucan-structure that acts as an acceptor site for the addition of (1-&gt;6)-beta-D-glucan at the cell surface. This Saccharomyces cerevisiae (strain ATCC 204508 / S288c) (Baker's yeast) protein is Beta-glucan synthesis-associated protein KRE6 (KRE6).